A 405-amino-acid polypeptide reads, in one-letter code: Formate-dependent phosphoribosylglycinamide formyltransferase (405 aa).

N(1)-(5-phospho-beta-D-ribosyl)glycinamide-binding positions include 27-28 (EL) and E87. ATP is bound by residues R120, K162, 167–172 (SSGKGQ), 202–205 (EGFI), and E210. Positions 125–320 (RLAAETLGLP…EFELHARALL (196 aa)) constitute an ATP-grasp domain. The Mg(2+) site is built by E279 and E291. Residues D298, K367, and 374 to 375 (RR) contribute to the N(1)-(5-phospho-beta-D-ribosyl)glycinamide site.

Belongs to the PurK/PurT family. Homodimer.

The enzyme catalyses N(1)-(5-phospho-beta-D-ribosyl)glycinamide + formate + ATP = N(2)-formyl-N(1)-(5-phospho-beta-D-ribosyl)glycinamide + ADP + phosphate + H(+). The protein operates within purine metabolism; IMP biosynthesis via de novo pathway; N(2)-formyl-N(1)-(5-phospho-D-ribosyl)glycinamide from N(1)-(5-phospho-D-ribosyl)glycinamide (formate route): step 1/1. Its function is as follows. Involved in the de novo purine biosynthesis. Catalyzes the transfer of formate to 5-phospho-ribosyl-glycinamide (GAR), producing 5-phospho-ribosyl-N-formylglycinamide (FGAR). Formate is provided by PurU via hydrolysis of 10-formyl-tetrahydrofolate. This is Formate-dependent phosphoribosylglycinamide formyltransferase from Bordetella avium (strain 197N).